Here is a 202-residue protein sequence, read N- to C-terminus: Dephospho-CoA kinase (202 aa).

The DPCK domain maps to 3–201; it reads AIGLTGGIGS…QRYLGFAAAA (199 aa). ATP is bound at residue 11-16; it reads GSGKTT.

The protein belongs to the CoaE family.

The protein resides in the cytoplasm. It carries out the reaction 3'-dephospho-CoA + ATP = ADP + CoA + H(+). Its pathway is cofactor biosynthesis; coenzyme A biosynthesis; CoA from (R)-pantothenate: step 5/5. Functionally, catalyzes the phosphorylation of the 3'-hydroxyl group of dephosphocoenzyme A to form coenzyme A. This Burkholderia lata (strain ATCC 17760 / DSM 23089 / LMG 22485 / NCIMB 9086 / R18194 / 383) protein is Dephospho-CoA kinase.